The following is a 304-amino-acid chain: MATH domain and coiled-coil domain-containing protein At2g42470 (304 aa).

One can recognise an MATH domain in the interval 6-123 (QTSFTFEIDN…NNKLIIEVQV (118 aa)). The stretch at 219-292 (FKVDWLKKKL…LKIELDRTRR (74 aa)) forms a coiled coil.

This chain is MATH domain and coiled-coil domain-containing protein At2g42470, found in Arabidopsis thaliana (Mouse-ear cress).